Consider the following 413-residue polypeptide: Protein arginine N-methyltransferase 2 (413 aa).

2 disordered regions span residues Asp65 to Val85 and Glu148 to Gln178. The segment covering Glu148–Gly173 has biased composition (acidic residues). Residues Thr192–Asp413 enclose the RMT2 domain. Residues Tyr201, Met230, His250–Val255, Glu271–His273, Trp298–Gln299, and Asp318 contribute to the S-adenosyl-L-methionine site.

The protein belongs to the class I-like SAM-binding methyltransferase superfamily. RMT2 methyltransferase family. Monomer.

It localises to the cytoplasm. The protein localises to the nucleus. In terms of biological role, S-adenosyl-L-methionine-dependent protein-arginine N-methyltransferase that methylates the delta-nitrogen atom of arginine residues to form N5-methylarginine (type IV) in target proteins. Monomethylates ribosomal protein L12. The chain is Protein arginine N-methyltransferase 2 from Aspergillus oryzae (strain ATCC 42149 / RIB 40) (Yellow koji mold).